The sequence spans 221 residues: Immediate early response gene 2 protein (221 aa).

Met1 carries the post-translational modification N-acetylmethionine. A disordered region spans residues 105-155; the sequence is ETPALCDPPPARVSRKRRSSSDLSDGSDAGLVPSKKARLEEVEGEATSEVP. The span at 125 to 136 shows a compositional bias: low complexity; sequence SDLSDGSDAGLV.

It belongs to the IER family.

The protein resides in the cytoplasm. It is found in the nucleus. Functionally, DNA-binding protein that seems to act as a transcription factor. Involved in the regulation of neuronal differentiation, acts upon JNK-signaling pathway activation and plays a role in neurite outgrowth in hippocampal cells. May mediate with FIBP FGF-signaling in the establishment of laterality in the embryo. Promotes cell motility, seems to stimulate tumor metastasis. The protein is Immediate early response gene 2 protein (Ier2) of Mus musculus (Mouse).